Here is a 61-residue protein sequence, read N- to C-terminus: Large ribosomal subunit protein bL32 (61 aa).

Basic residues predominate over residues 1–16; the sequence is MAVPKRKTSPSRRGMR. Residues 1–61 form a disordered region; sequence MAVPKRKTSP…RQILKPKAEA (61 aa). The segment covering 28–44 has biased composition (basic and acidic residues); that stretch reads VEDKDSGELRRPHHLDL.

Belongs to the bacterial ribosomal protein bL32 family.

This is Large ribosomal subunit protein bL32 from Xanthobacter autotrophicus (strain ATCC BAA-1158 / Py2).